A 246-amino-acid polypeptide reads, in one-letter code: MRKIALILAMLLIPCVSFAGLLGSSSSTTPVSKEYKQQLMGSPVYIQIFKEERTLDLYVKMGEQYQLLDSYKICKYSGGLGPKQRQGDFKSPEGFYSVQRNQLKPDSRYYKAINIGFPNAYDRAHGYEGKYLMIHGDCVSIGCYAMTNQGIDEIFQFVTGALVFGQPSVQVSIYPFRMTDANMKRHKYSNFKDFWEQLKPGYDYFEQTRKPPTVSVVNGRYVVSKPLSHEVVQPQLASNYTLPEAK.

The N-terminal stretch at 1 to 19 (MRKIALILAMLLIPCVSFA) is a signal peptide. The 131-residue stretch at 44-174 (VYIQIFKEER…GQPSVQVSIY (131 aa)) folds into the L,D-TPase catalytic domain. Catalysis depends on H135, which acts as the Proton donor/acceptor. The active-site Nucleophile is the C143.

It belongs to the YkuD family.

The protein operates within cell wall biogenesis; peptidoglycan biosynthesis. In Escherichia coli O157:H7, this protein is Putative L,D-transpeptidase YafK (yafK).